Consider the following 874-residue polypeptide: Alanine--tRNA ligase (874 aa).

Zn(2+)-binding residues include His564, His568, Cys665, and His669.

The protein belongs to the class-II aminoacyl-tRNA synthetase family. Zn(2+) is required as a cofactor.

It is found in the cytoplasm. It carries out the reaction tRNA(Ala) + L-alanine + ATP = L-alanyl-tRNA(Ala) + AMP + diphosphate. Its function is as follows. Catalyzes the attachment of alanine to tRNA(Ala) in a two-step reaction: alanine is first activated by ATP to form Ala-AMP and then transferred to the acceptor end of tRNA(Ala). Also edits incorrectly charged Ser-tRNA(Ala) and Gly-tRNA(Ala) via its editing domain. This chain is Alanine--tRNA ligase, found in Acidovorax sp. (strain JS42).